The sequence spans 609 residues: Rhotekin-2 (609 aa).

One can recognise an REM-1 domain in the interval S5–N81. Positions K56–E91 form a coiled coil. The PH domain maps to E286–F393. Disordered regions lie at residues H495–S520 and K554–V609. The segment covering R569–F582 has biased composition (basic and acidic residues).

In terms of tissue distribution, expressed in lymphocytes, CD4 positive T-cells and bone marrow-derived cells. Also expressed in lung, colon, thymus and brain.

In terms of biological role, may play an important role in lymphopoiesis. The protein is Rhotekin-2 (RTKN2) of Homo sapiens (Human).